The sequence spans 801 residues: Na(+)/H(+) antiporter subunit A1 (801 aa).

Transmembrane regions (helical) follow at residues 4–25, 30–49, 79–101, 108–127, 131–153, 166–188, 208–230, 243–265, 270–289, 302–324, 339–361, 373–395, 429–451, 472–494, 526–548, 589–611, 621–641, 646–668, 672–694, 707–729, and 767–784; these read LHIA…YRFF, LGWF…LTLI, LGLL…SIGY, LGNF…GVVL, VIIL…SFWR, LIIT…IPTQ, FIFA…PFYI, SAYL…MTPI, QGWI…WASL, AFST…ISYH, AAIF…TGAV, LGGL…LSMA, YLFP…KFIM, ILML…FPGI, AFLS…SYWV, NNLV…SVPF, IRIF…LILF, LFSI…FFKA, ALTQ…YHLP, LTNA…IAYG, and LFES…YTMI.

The protein belongs to the CPA3 antiporters (TC 2.A.63) subunit A family. As to quaternary structure, may form a heterooligomeric complex that consists of seven subunits: mnhA1, mnhB1, mnhC1, mnhD1, mnhE1, mnhF1 and mnhG1.

It is found in the cell membrane. With respect to regulation, na(+) extrusion is completely inhibited by the H(+) conductor carbonyl cyanide m-chlorophenylhydrazone (CCCP). Functionally, mnh complex is a Na(+)/H(+) antiporter involved in Na(+) excretion. The protein is Na(+)/H(+) antiporter subunit A1 (mnhA1) of Staphylococcus aureus (strain MRSA252).